The primary structure comprises 284 residues: MKLCDFEVGLDKPFFLIAGTCVIESEQMAIDTAGTLKEITGALGIPFIYKSSFDKANRSSDASFRGLGMEEGLRILSEVRRQVGVPVLTDIHEIDEIKPVAEVVDVLQTPAFLCRQTDFIRACAQSGKPVNIKKGQFLAPHDMKNVIDKARHAARDAGLPEDNFMACERGASFGYNNLVSDMRSLAIMRETGAPVVFDATHSVQLPGGQGTSSGGQREFVPVLARAAIAVGVAGVFMETHPDPACAKSDGPNAVPLRRMKDLLSVLKELDALTKRSGFLENQFD.

This sequence belongs to the KdsA family.

The protein resides in the cytoplasm. The catalysed reaction is D-arabinose 5-phosphate + phosphoenolpyruvate + H2O = 3-deoxy-alpha-D-manno-2-octulosonate-8-phosphate + phosphate. It functions in the pathway carbohydrate biosynthesis; 3-deoxy-D-manno-octulosonate biosynthesis; 3-deoxy-D-manno-octulosonate from D-ribulose 5-phosphate: step 2/3. It participates in bacterial outer membrane biogenesis; lipopolysaccharide biosynthesis. The chain is 2-dehydro-3-deoxyphosphooctonate aldolase from Ralstonia pickettii (strain 12J).